Reading from the N-terminus, the 295-residue chain is tRNA pseudouridine synthase A (295 aa).

The active-site Nucleophile is D67. Y125 contributes to the substrate binding site.

The protein belongs to the tRNA pseudouridine synthase TruA family. Homodimer.

The enzyme catalyses uridine(38/39/40) in tRNA = pseudouridine(38/39/40) in tRNA. Its function is as follows. Formation of pseudouridine at positions 38, 39 and 40 in the anticodon stem and loop of transfer RNAs. The polypeptide is tRNA pseudouridine synthase A (Prochlorococcus marinus (strain MIT 9303)).